Reading from the N-terminus, the 192-residue chain is MNANLPPSAISELHGPRLLLRAWRDSDREAFAEMCADPQVMEFFPSVLDRAQSDALVDRVQAHFAERGYGPWALELPGEAAFIGFTGLFDVTMDVHFAPTVEIGWRLAPAYWGRGLAREAAETALDFAFERLRLPEVVAFTTPPNRRSWGLMERLGMRRDPAEDFDHPLLAADHPMRRHILYRVDAARWAER.

In terms of domain architecture, N-acetyltransferase spans 18–187 (LLLRAWRDSD…RHILYRVDAA (170 aa)). Residues 105 to 107 (WRL), Gly-113, Asn-145, and 150 to 152 (GLM) each bind CoA.

In terms of biological role, catalyzes the transfer of an acetyl group from acetyl coenzyme A (AcCoA) to an acceptor substrate and releases both CoA and the acetylated product. It prefers the peptide Asp-Phe methyl ester (or aspartame) and the peptide antibiotics polymyxin B and colistin. Other substrates like dopamine, serotonin, puromycin, chloramphenicol, D-glucosamine, glycine and N-alpha-acetyl-L-glutamine are used and displayed lower activity. This Pseudomonas aeruginosa (strain ATCC 15692 / DSM 22644 / CIP 104116 / JCM 14847 / LMG 12228 / 1C / PRS 101 / PAO1) protein is Acetyltransferase PA3944.